Here is a 391-residue protein sequence, read N- to C-terminus: Glycerol-3-phosphate dehydrogenase [NAD(+)] 1 (391 aa).

Residues 41–46 (GSGNWG), F129, K152, and A185 contribute to the NAD(+) site. K152 provides a ligand contact to substrate. Catalysis depends on K245, which acts as the Proton acceptor. NAD(+) is bound by residues R310 and Q339. 310–311 (RN) is a binding site for substrate.

The protein belongs to the NAD-dependent glycerol-3-phosphate dehydrogenase family.

The protein localises to the cytoplasm. The enzyme catalyses sn-glycerol 3-phosphate + NAD(+) = dihydroxyacetone phosphate + NADH + H(+). The chain is Glycerol-3-phosphate dehydrogenase [NAD(+)] 1 (GPD1) from Saccharomyces uvarum (Yeast).